The following is a 280-amino-acid chain: Hematopoietically-expressed homeobox protein HHEX homolog (280 aa).

2 disordered regions span residues 1-35 (MSTL…GLAP) and 221-280 (RRVK…EKEA). A DNA-binding region (homeobox) is located at residues 165–224 (RKGGQVRFSNDQTMELEKKFESQKYLSPPERKKLAKLLQLSERQVKTWFQNRRAKWRRVK). A compositionally biased stretch (basic and acidic residues) spans 232–252 (GEGDENSHEKPRDLDRDDFSR).

It is found in the nucleus. In terms of biological role, transcription factor that may play a central role in activating or maintaining gene expression in the vegetal pole. Part of a gene regulatory circuit with Erg and Tgif that operates early in mesoderm development. This Patiria miniata (Bat star) protein is Hematopoietically-expressed homeobox protein HHEX homolog.